The sequence spans 428 residues: 3-phosphoshikimate 1-carboxyvinyltransferase (428 aa).

Positions 21, 22, and 26 each coordinate 3-phosphoshikimate. Lysine 21 contacts phosphoenolpyruvate. Phosphoenolpyruvate is bound by residues glycine 91 and arginine 119. 3-phosphoshikimate is bound by residues serine 164, glutamine 166, aspartate 313, and lysine 340. Glutamine 166 serves as a coordination point for phosphoenolpyruvate. Aspartate 313 acts as the Proton acceptor in catalysis. Arginine 344 and arginine 386 together coordinate phosphoenolpyruvate.

The protein belongs to the EPSP synthase family. As to quaternary structure, monomer.

It is found in the cytoplasm. The catalysed reaction is 3-phosphoshikimate + phosphoenolpyruvate = 5-O-(1-carboxyvinyl)-3-phosphoshikimate + phosphate. Its pathway is metabolic intermediate biosynthesis; chorismate biosynthesis; chorismate from D-erythrose 4-phosphate and phosphoenolpyruvate: step 6/7. Functionally, catalyzes the transfer of the enolpyruvyl moiety of phosphoenolpyruvate (PEP) to the 5-hydroxyl of shikimate-3-phosphate (S3P) to produce enolpyruvyl shikimate-3-phosphate and inorganic phosphate. The sequence is that of 3-phosphoshikimate 1-carboxyvinyltransferase from Campylobacter jejuni (strain RM1221).